An 82-amino-acid polypeptide reads, in one-letter code: MLKELINRLLWHPKSSPKDYVIIYLHRGAPDNKKSISVNNIIINDSFLVFNETHIPFHRILEIKNLKTGEILYKKVDIDGLR.

Belongs to the UPF0248 family.

This chain is UPF0248 protein Mevan_1298, found in Methanococcus vannielii (strain ATCC 35089 / DSM 1224 / JCM 13029 / OCM 148 / SB).